A 276-amino-acid polypeptide reads, in one-letter code: 2-dehydro-3-deoxyphosphooctonate aldolase (276 aa).

It belongs to the KdsA family.

It is found in the cytoplasm. The catalysed reaction is D-arabinose 5-phosphate + phosphoenolpyruvate + H2O = 3-deoxy-alpha-D-manno-2-octulosonate-8-phosphate + phosphate. Its pathway is carbohydrate biosynthesis; 3-deoxy-D-manno-octulosonate biosynthesis; 3-deoxy-D-manno-octulosonate from D-ribulose 5-phosphate: step 2/3. It participates in bacterial outer membrane biogenesis; lipopolysaccharide biosynthesis. In Stenotrophomonas maltophilia (strain R551-3), this protein is 2-dehydro-3-deoxyphosphooctonate aldolase.